Reading from the N-terminus, the 446-residue chain is Amino-acid acetyltransferase (446 aa).

The region spanning 299–431 (EQVRDAEIDD…SHLPMKKQKL (133 aa)) is the N-acetyltransferase domain.

It belongs to the acetyltransferase family. ArgA subfamily.

It is found in the cytoplasm. The catalysed reaction is L-glutamate + acetyl-CoA = N-acetyl-L-glutamate + CoA + H(+). It functions in the pathway amino-acid biosynthesis; L-arginine biosynthesis; N(2)-acetyl-L-ornithine from L-glutamate: step 1/4. The sequence is that of Amino-acid acetyltransferase from Aliivibrio fischeri (strain MJ11) (Vibrio fischeri).